The chain runs to 222 residues: Charged multivesicular body protein 3 (222 aa).

Gly-2 carries N-myristoyl glycine lipidation. The intramolecular interaction with C-terminus stretch occupies residues 2–113 (GLFGKTQEKP…LQKSTEVMKA (112 aa)). The stretch at 22–54 (KIRKEMRVVDRQIRDIQREEEKVKRSVKDAAKK) forms a coiled coil. 2 important for autoinhibitory function regions span residues 59 to 64 (VCVVLA) and 168 to 169 (IL). A coiled-coil region spans residues 149–222 (ESMDDQEEME…MQSRLATLRS (74 aa)). The tract at residues 151–220 (MDDQEEMEEA…EAMQSRLATL (70 aa)) is intramolecular interaction with N-terminus. The segment at 151–222 (MDDQEEMEEA…MQSRLATLRS (72 aa)) is interaction with VPS4A. Residue Lys-179 forms a Glycyl lysine isopeptide (Lys-Gly) (interchain with G-Cter in ubiquitin) linkage. Positions 180–222 (APSKVTDALPEPEPSGAMAASDEEEEEEEALEAMQSRLATLRS) are disordered. Interaction with STAMBP stretches follow at residues 196 to 222 (AMAA…TLRS), 203 to 207 (EEEEE), and 221 to 222 (RS). The residue at position 200 (Ser-200) is a Phosphoserine. The segment covering 200–210 (SDEEEEEEEAL) has biased composition (acidic residues). The MIT-interacting motif motif lies at 201-211 (DEEEEEEEALE).

The protein belongs to the SNF7 family. Probable core component of the endosomal sorting required for transport complex III (ESCRT-III). ESCRT-III components are thought to multimerize to form a flat lattice on the perimeter membrane of the endosome. Several assembly forms of ESCRT-III may exist that interact and act sequentially. Forms a metastable monomer in solution; its core structure (without part of the putative autoinhibitory C-terminal acidic region) oligomerizes into a flat lattice via two different dimerization interfaces. In vitro, heteromerizes with CHMP2A (but not CHMP4) to form helical tubular structures that expose membrane-interacting sites on the outside whereas VPS4B can associate on the inside of the tubule. May interact with IGFBP7; the relevance of such interaction however remains unclear. Interacts with CHMP2A. Interacts with CHMP4A; the interaction requires the release of CHMP4A autoinhibition. Interacts with VPS4A. Interacts with STAMBP; the interaction appears to relieve the autoinhibition of CHMP3. Interacts with VTA1.

Its subcellular location is the cytoplasm. It localises to the cytosol. The protein localises to the membrane. The protein resides in the endosome. It is found in the late endosome membrane. Probable core component of the endosomal sorting required for transport complex III (ESCRT-III) which is involved in multivesicular bodies (MVBs) formation and sorting of endosomal cargo proteins into MVBs. MVBs contain intraluminal vesicles (ILVs) that are generated by invagination and scission from the limiting membrane of the endosome and mostly are delivered to lysosomes enabling degradation of membrane proteins, such as stimulated growth factor receptors, lysosomal enzymes and lipids. The MVB pathway appears to require the sequential function of ESCRT-O, -I,-II and -III complexes. ESCRT-III proteins mostly dissociate from the invaginating membrane before the ILV is released. The ESCRT machinery also functions in topologically equivalent membrane fission events, such as the terminal stages of cytokinesis and the budding of enveloped viruses (lentiviruses). ESCRT-III proteins are believed to mediate the necessary vesicle extrusion and/or membrane fission activities, possibly in conjunction with the AAA ATPase VPS4. Selectively binds to phosphatidylinositol 3,5-bisphosphate PtdIns(3,5)P2 and PtdIns(3,4)P2 in preference to other phosphoinositides tested. Involved in late stages of cytokinesis. Plays a role in endosomal sorting/trafficking of EGF receptor. This chain is Charged multivesicular body protein 3 (CHMP3), found in Macaca fascicularis (Crab-eating macaque).